Here is a 339-residue protein sequence, read N- to C-terminus: MKRPCEETTSESDLDETIDVGSENNYPGHATSSVMRSNSPTTTSQIMARKKRRGIIEKRRRDRINNSLSELRRLVPTAFEKQGSAKLEKAEILQMTVDHLKMLQATGGKGYFDAHALATDFMSIGFRECLTEVARYLSSVEGLDPSDPLRVRLVSHLSTCASQREAAVMTSSMAHHHHPLHPHHWAAAFHHLPTALLQPNGLHTSESTPCRLSTSSEVPSAHGSALLTATFAHADSALRMPSGGTVAPCVPPLSTSLLSLSATVHAAAAAATAAAHSFPLSFAGAFPMLPSNAAAAAAVAAATAISPPLSVSAASSPQQTSTGTNNKPYQPWGTEVGAF.

Residues 1–52 (MKRPCEETTSESDLDETIDVGSENNYPGHATSSVMRSNSPTTTSQIMARKKR) form a disordered region. The segment covering 8–18 (TTSESDLDETI) has biased composition (acidic residues). The span at 22–46 (SENNYPGHATSSVMRSNSPTTTSQI) shows a compositional bias: polar residues. A transcriptional repression and interaction with NCOR1 and SIN3A region spans residues 47–116 (MARKKRRGII…GGKGYFDAHA (70 aa)). The region spanning 48 to 103 (ARKKRRGIIEKRRRDRINNSLSELRRLVPTAFEKQGSAKLEKAEILQMTVDHLKML) is the bHLH domain. Positions 122–157 (MSIGFRECLTEVARYLSSVEGLDPSDPLRVRLVSHL) constitute an Orange domain. The disordered stretch occupies residues 310–339 (SVSAASSPQQTSTGTNNKPYQPWGTEVGAF). Over residues 318 to 328 (QQTSTGTNNKP) the composition is skewed to polar residues. The YQPW motif motif lies at 329–332 (YQPW).

The protein belongs to the HEY family. As to quaternary structure, may self-associate. Interacts with ARNT. Interacts with GATA4, GATA6, HES1 and HEYL. Interacts with HDAC1, NCOR1 and SIN3A. As to expression, highly expressed in the aorta, lower expression detected in the heart, brain, kidney, lung, muscle, ovary and testis.

It localises to the nucleus. Its function is as follows. Transcriptional repressor which functions as a downstream effector of Notch signaling in cardiovascular development. Specifically required for the Notch-induced endocardial epithelial to mesenchymal transition, which is itself criticial for cardiac valve and septum development. May be required in conjunction with HEY1 to specify arterial cell fate or identity. Promotes maintenance of neuronal precursor cells and glial versus neuronal fate specification. Binds preferentially to the canonical E box sequence 5'-CACGTG-3'. Represses transcription by the cardiac transcriptional activators GATA4 and GATA6 and by the neuronal bHLH factors ASCL1/MASH1 and NEUROD4/MATH3. The polypeptide is Hairy/enhancer-of-split related with YRPW motif protein 2 (Hey2) (Mus musculus (Mouse)).